Consider the following 476-residue polypeptide: Serine/threonine-protein kinase Chk1 (476 aa).

The segment at 1–265 is interaction with CLSPN; sequence MAVPFVEDWD…IPDIKKDRWY (265 aa). The region spanning 9–265 is the Protein kinase domain; the sequence is WDLVQTLGEG…IPDIKKDRWY (257 aa). ATP contacts are provided by residues 15 to 23 and Lys-38; that span reads LGEGAYGEV. Asp-130 acts as the Proton acceptor in catalysis. Lys-132 is covalently cross-linked (Glycyl lysine isopeptide (Lys-Gly) (interchain with G-Cter in ubiquitin)). Residues 270-327 form a disordered region; it reads KKGAKRPRVTSGGVSESPSGFSKHIQSNLDFSPVNSASSEENVKYSSSQPEPRTGLSL. A phosphoserine mark is found at Ser-280, Ser-286, Ser-296, and Ser-301. A compositionally biased stretch (polar residues) spans 281–320; that stretch reads GGVSESPSGFSKHIQSNLDFSPVNSASSEENVKYSSSQPE. Phosphoserine; by ATM and ATR is present on Ser-317. At Ser-331 the chain carries Phosphoserine. Phosphoserine; by ATM and ATR is present on Ser-345. Residues 391-476 form an autoinhibitory region region; it reads QCLKETCEKL…SSQKIWLPAT (86 aa). Residue Lys-436 forms a Glycyl lysine isopeptide (Lys-Gly) (interchain with G-Cter in ubiquitin) linkage. Ser-467 and Ser-468 each carry phosphoserine.

It belongs to the protein kinase superfamily. CAMK Ser/Thr protein kinase family. NIM1 subfamily. Interacts (phosphorylated by ATR) with RAD51. Interacts with and phosphorylates CLSPN, an adapter protein that regulates the ATR-dependent phosphorylation of CHEK1. Interacts with BRCA1. Interacts with and phosphorylates CDC25A, CDC25B and CDC25C. Interacts with FBXO6, which regulates CHEK1. Interacts with PPM1D, which regulates CHEK1 through dephosphorylation. Interacts with TIMELESS; DNA damage-dependent. Interacts with FEM1B; activates CHEK1 in response to stress. Interacts with TLK1. Interacts with XPO1 and YWHAZ. Interacts with CDK5RAP3; antagonizes CHEK1. As to quaternary structure, isoform 1 associates with isoform 2, the interaction is disrupted upon phosphorylation by ATR. Phosphorylated by ATR in a RAD17-dependent manner in response to ultraviolet irradiation and inhibition of DNA replication. Phosphorylated by ATM in response to ionizing irradiation. ATM and ATR can both phosphorylate Ser-317 and Ser-345 and this results in enhanced kinase activity. Phosphorylation at Ser-345 induces a change in the conformation of the protein, activates the kinase activity and is a prerequisite for interaction with FBXO6 and subsequent ubiquitination at Lys-436. Phosphorylation at Ser-345 also increases binding to 14-3-3 proteins and promotes nuclear retention. Conversely, dephosphorylation at Ser-345 by PPM1D may contribute to exit from checkpoint mediated cell cycle arrest. Phosphorylation at Ser-280 by AKT1/PKB, may promote mono and/or diubiquitination. Also phosphorylated at undefined residues during mitotic arrest, resulting in decreased activity. Post-translationally, ubiquitinated. Mono or diubiquitination promotes nuclear exclusion. The activated form (phosphorylated on Ser-345) is polyubiquitinated at Lys-436 by some SCF-type E3 ubiquitin ligase complex containing FBXO6 promoting its degradation. Ubiquitination and degradation are required to terminate the checkpoint and ensure that activated CHEK1 does not accumulate as cells progress through S phase, when replication forks encounter transient impediments during normal DNA replication. 'Lys-63'-mediated ubiquitination by TRAF4 at Lys-132 activates cell cycle arrest and activation of DNA repair. In terms of processing, proteolytically cleaved at the C-terminus by SPRTN during normal DNA replication, thereby promoting CHEK1 removal from chromatin and activating the protein kinase activity. In terms of tissue distribution, expressed ubiquitously with the most abundant expression in thymus, testis, small intestine and colon.

It localises to the nucleus. The protein resides in the chromosome. It is found in the cytoplasm. Its subcellular location is the cytoskeleton. The protein localises to the microtubule organizing center. It localises to the centrosome. The catalysed reaction is L-seryl-[protein] + ATP = O-phospho-L-seryl-[protein] + ADP + H(+). It catalyses the reaction L-threonyl-[protein] + ATP = O-phospho-L-threonyl-[protein] + ADP + H(+). Activated through phosphorylation predominantly by ATR but also by ATM in response to DNA damage or inhibition of DNA replication. Activation is modulated by several mediators including CLSPN, BRCA1 and FEM1B. Proteolytic cleavage at the C-terminus by SPRTN during normal DNA replication activates the protein kinase activity. In terms of biological role, serine/threonine-protein kinase which is required for checkpoint-mediated cell cycle arrest and activation of DNA repair in response to the presence of DNA damage or unreplicated DNA. May also negatively regulate cell cycle progression during unperturbed cell cycles. This regulation is achieved by a number of mechanisms that together help to preserve the integrity of the genome. Recognizes the substrate consensus sequence [R-X-X-S/T]. Binds to and phosphorylates CDC25A, CDC25B and CDC25C. Phosphorylation of CDC25A at 'Ser-178' and 'Thr-507' and phosphorylation of CDC25C at 'Ser-216' creates binding sites for 14-3-3 proteins which inhibit CDC25A and CDC25C. Phosphorylation of CDC25A at 'Ser-76', 'Ser-124', 'Ser-178', 'Ser-279' and 'Ser-293' promotes proteolysis of CDC25A. Phosphorylation of CDC25A at 'Ser-76' primes the protein for subsequent phosphorylation at 'Ser-79', 'Ser-82' and 'Ser-88' by NEK11, which is required for polyubiquitination and degradation of CDCD25A. Inhibition of CDC25 leads to increased inhibitory tyrosine phosphorylation of CDK-cyclin complexes and blocks cell cycle progression. Also phosphorylates NEK6. Binds to and phosphorylates RAD51 at 'Thr-309', which promotes the release of RAD51 from BRCA2 and enhances the association of RAD51 with chromatin, thereby promoting DNA repair by homologous recombination. Phosphorylates multiple sites within the C-terminus of TP53, which promotes activation of TP53 by acetylation and promotes cell cycle arrest and suppression of cellular proliferation. Also promotes repair of DNA cross-links through phosphorylation of FANCE. Binds to and phosphorylates TLK1 at 'Ser-743', which prevents the TLK1-dependent phosphorylation of the chromatin assembly factor ASF1A. This may enhance chromatin assembly both in the presence or absence of DNA damage. May also play a role in replication fork maintenance through regulation of PCNA. May regulate the transcription of genes that regulate cell-cycle progression through the phosphorylation of histones. Phosphorylates histone H3.1 (to form H3T11ph), which leads to epigenetic inhibition of a subset of genes. May also phosphorylate RB1 to promote its interaction with the E2F family of transcription factors and subsequent cell cycle arrest. Phosphorylates SPRTN, promoting SPRTN recruitment to chromatin. Reduces replication stress and activates the G2/M checkpoint, by phosphorylating and inactivating PABIR1/FAM122A and promoting the serine/threonine-protein phosphatase 2A-mediated dephosphorylation and stabilization of WEE1 levels and activity. Its function is as follows. Endogenous repressor of isoform 1, interacts with, and antagonizes CHK1 to promote the S to G2/M phase transition. The sequence is that of Serine/threonine-protein kinase Chk1 (CHEK1) from Homo sapiens (Human).